Here is a 375-residue protein sequence, read N- to C-terminus: Hemolysin BL-binding component (375 aa).

A signal peptide spans 1 to 31 (MIKKIPYKLLAVSTLLTITTANVVSPVATFA). The chain crosses the membrane as a helical span at residues 232-252 (FNVMKGAILGLPIIGGIIVGV).

Composed of a binding component, B, and two lytic components, L1 and L2. All three subunits act synergically to cause hemolysis.

It localises to the secreted. Its subcellular location is the host cell membrane. Cytotoxic protein, part of the enterotoxin complex. Responsible for binding to erythrocytes. This enterotoxin is thought to be the cause of the diarrheal form of gastroenteritis caused by food-borne strains of B.cereus. The sequence is that of Hemolysin BL-binding component (hblA) from Bacillus cereus.